A 69-amino-acid chain; its full sequence is Putative membrane protein insertion efficiency factor (69 aa).

It belongs to the UPF0161 family.

The protein resides in the cell membrane. Its function is as follows. Could be involved in insertion of integral membrane proteins into the membrane. This Clostridium botulinum (strain Kyoto / Type A2) protein is Putative membrane protein insertion efficiency factor.